A 705-amino-acid chain; its full sequence is Elongation factor G (705 aa).

The 283-residue stretch at 8–290 folds into the tr-type G domain; sequence HRYRNIGIMA…GVIHLLPSPA (283 aa). Residues 17–24, 88–92, and 142–145 contribute to the GTP site; these read AHIDAGKT, DTPGH, and NKMD.

The protein belongs to the TRAFAC class translation factor GTPase superfamily. Classic translation factor GTPase family. EF-G/EF-2 subfamily.

The protein localises to the cytoplasm. Catalyzes the GTP-dependent ribosomal translocation step during translation elongation. During this step, the ribosome changes from the pre-translocational (PRE) to the post-translocational (POST) state as the newly formed A-site-bound peptidyl-tRNA and P-site-bound deacylated tRNA move to the P and E sites, respectively. Catalyzes the coordinated movement of the two tRNA molecules, the mRNA and conformational changes in the ribosome. In Xylella fastidiosa (strain M23), this protein is Elongation factor G.